The chain runs to 120 residues: Protein VraC (120 aa).

The sequence is that of Protein VraC from Staphylococcus epidermidis (strain ATCC 12228 / FDA PCI 1200).